We begin with the raw amino-acid sequence, 175 residues long: tRNA (cytidine(56)-2'-O)-methyltransferase (175 aa).

Leu-83 lines the S-adenosyl-L-methionine pocket.

It belongs to the aTrm56 family. Homodimer.

It localises to the cytoplasm. The catalysed reaction is cytidine(56) in tRNA + S-adenosyl-L-methionine = 2'-O-methylcytidine(56) in tRNA + S-adenosyl-L-homocysteine + H(+). Specifically catalyzes the AdoMet-dependent 2'-O-ribose methylation of cytidine at position 56 in tRNAs. In Methanosphaera stadtmanae (strain ATCC 43021 / DSM 3091 / JCM 11832 / MCB-3), this protein is tRNA (cytidine(56)-2'-O)-methyltransferase.